The primary structure comprises 995 residues: Integrator complex subunit 8 (995 aa).

Thr-18 bears the Phosphothreonine mark. The WFEF motif motif lies at 24–29 (WFEFLL). 4 TPR repeats span residues 250-288 (CQVCYDLGAAYFQQGSTNSAVYENAREKFFRTKELIAEI), 320-356 (SQQLTPYSQVHICLRSGNYQEVIQIFIEDNLTLSLPV), 570-603 (VYILMAKGLHCSTVKDFSHAKQLFAACLELVTEF), and 833-866 (HSWLIIQADIYFATNQYSAALHYYLQAGAVCSDF).

This sequence belongs to the Integrator subunit 8 family. In terms of assembly, component of the Integrator complex, composed of core subunits INTS1, INTS2, INTS3, INTS4, INTS5, INTS6, INTS7, INTS8, INTS9/RC74, INTS10, INTS11/CPSF3L, INTS12, INTS13, INTS14 and INTS15. The core complex associates with protein phosphatase 2A subunits PPP2CA and PPP2R1A, to form the Integrator-PP2A (INTAC) complex.

It localises to the nucleus. Its subcellular location is the chromosome. Component of the integrator complex, a multiprotein complex that terminates RNA polymerase II (Pol II) transcription in the promoter-proximal region of genes. The integrator complex provides a quality checkpoint during transcription elongation by driving premature transcription termination of transcripts that are unfavorably configured for transcriptional elongation: the complex terminates transcription by (1) catalyzing dephosphorylation of the C-terminal domain (CTD) of Pol II subunit POLR2A/RPB1 and SUPT5H/SPT5, (2) degrading the exiting nascent RNA transcript via endonuclease activity and (3) promoting the release of Pol II from bound DNA. The integrator complex is also involved in terminating the synthesis of non-coding Pol II transcripts, such as enhancer RNAs (eRNAs), small nuclear RNAs (snRNAs), telomerase RNAs and long non-coding RNAs (lncRNAs). Within the integrator complex, INTS8 is required for the recruitment of protein phosphatase 2A (PP2A) to transcription pause-release checkpoint. The protein is Integrator complex subunit 8 of Homo sapiens (Human).